The chain runs to 464 residues: 3-isopropylmalate dehydratase large subunit (464 aa).

Residues C337, C397, and C400 each contribute to the [4Fe-4S] cluster site.

This sequence belongs to the aconitase/IPM isomerase family. LeuC type 1 subfamily. In terms of assembly, heterodimer of LeuC and LeuD. The cofactor is [4Fe-4S] cluster.

It carries out the reaction (2R,3S)-3-isopropylmalate = (2S)-2-isopropylmalate. It functions in the pathway amino-acid biosynthesis; L-leucine biosynthesis; L-leucine from 3-methyl-2-oxobutanoate: step 2/4. Functionally, catalyzes the isomerization between 2-isopropylmalate and 3-isopropylmalate, via the formation of 2-isopropylmaleate. The chain is 3-isopropylmalate dehydratase large subunit from Bacillus cereus (strain ZK / E33L).